Reading from the N-terminus, the 314-residue chain is Probable 2-(5''-triphosphoribosyl)-3'-dephosphocoenzyme-A synthase (314 aa).

This sequence belongs to the CitG/MdcB family.

The catalysed reaction is 3'-dephospho-CoA + ATP = 2'-(5''-triphospho-alpha-D-ribosyl)-3'-dephospho-CoA + adenine. The polypeptide is Probable 2-(5''-triphosphoribosyl)-3'-dephosphocoenzyme-A synthase (Photobacterium profundum (strain SS9)).